Consider the following 796-residue polypeptide: Protein translocase subunit SecA 2 (796 aa).

Residues glutamine 84, 102–106 (GEGKT), and aspartate 496 contribute to the ATP site.

Belongs to the SecA family. Monomer and homodimer (Potential). Part of the accessory SecA2/SecY2 protein translocation apparatus required to export cell wall protein SraP.

The protein localises to the cell membrane. It is found in the cytoplasm. It carries out the reaction ATP + H2O + cellular proteinSide 1 = ADP + phosphate + cellular proteinSide 2.. Its function is as follows. Part of the accessory SecA2/SecY2 system specifically required to export SraP, a serine-rich repeat cell wall protein encoded upstream in the same operon. This Staphylococcus aureus (strain NCTC 8325 / PS 47) protein is Protein translocase subunit SecA 2.